Reading from the N-terminus, the 256-residue chain is MDRRSRAHQWRRARHNYNDLCPPIGRRAATALLWLSCSIALLRALASSNARAQQRAAQRRSFLNAHHRSAAAAAAAQVLPESSESESDHEHEEAEPELARPECLEYDQDDYETETDSETEPESDIQSETEFETEPETEPETAPTTEPETEPEDERGPRGATFNQSLTQRLHALKLQSADASPRRAQPTTQEPESASEGEEPQREPLDEDPRDPEESEERREANRQPRRCKTRRPARRRDQSPESPPRKGPIPIRRH.

The N-terminal stretch at 1–46 (MDRRSRAHQWRRARHNYNDLCPPIGRRAATALLWLSCSIALLRALA) is a signal peptide. The segment at 61 to 256 (SFLNAHHRSA…RKGPIPIRRH (196 aa)) is disordered. Positions 86-103 (ESDHEHEEAEPELARPEC) are enriched in basic and acidic residues. Composition is skewed to acidic residues over residues 104–139 (LEYD…ETEP) and 206–216 (LDEDPRDPEES). The span at 225 to 236 (QPRRCKTRRPAR) shows a compositional bias: basic residues.

This sequence belongs to the NESP55 family. Binds keratan sulfate chains. Post-translationally, may be proteolytically processed to give rise to a number of active peptides.

It is found in the cytoplasmic vesicle. The protein resides in the secretory vesicle. It localises to the synaptic vesicle. Its subcellular location is the secreted. The polypeptide is Neuroendocrine secretory protein 55 (Rattus norvegicus (Rat)).